Here is a 239-residue protein sequence, read N- to C-terminus: tRNA1(Val) (adenine(37)-N6)-methyltransferase (239 aa).

Belongs to the methyltransferase superfamily. tRNA (adenine-N(6)-)-methyltransferase family.

It localises to the cytoplasm. The enzyme catalyses adenosine(37) in tRNA1(Val) + S-adenosyl-L-methionine = N(6)-methyladenosine(37) in tRNA1(Val) + S-adenosyl-L-homocysteine + H(+). Functionally, specifically methylates the adenine in position 37 of tRNA(1)(Val) (anticodon cmo5UAC). The polypeptide is tRNA1(Val) (adenine(37)-N6)-methyltransferase (Vibrio vulnificus (strain YJ016)).